Reading from the N-terminus, the 424-residue chain is Enolase (424 aa).

Residue Gln-162 participates in (2R)-2-phosphoglycerate binding. Glu-204 serves as the catalytic Proton donor. Positions 241, 284, and 311 each coordinate Mg(2+). Positions 336, 365, 366, and 387 each coordinate (2R)-2-phosphoglycerate. The active-site Proton acceptor is the Lys-336.

Belongs to the enolase family. Mg(2+) is required as a cofactor.

It localises to the cytoplasm. It is found in the secreted. Its subcellular location is the cell surface. It carries out the reaction (2R)-2-phosphoglycerate = phosphoenolpyruvate + H2O. Its pathway is carbohydrate degradation; glycolysis; pyruvate from D-glyceraldehyde 3-phosphate: step 4/5. Catalyzes the reversible conversion of 2-phosphoglycerate (2-PG) into phosphoenolpyruvate (PEP). It is essential for the degradation of carbohydrates via glycolysis. This is Enolase from Chelativorans sp. (strain BNC1).